A 483-amino-acid polypeptide reads, in one-letter code: Regulatory protein ViaA (483 aa).

The protein belongs to the ViaA family. In terms of assembly, homodimer. Interacts with RavA.

The protein resides in the cytoplasm. In terms of biological role, component of the RavA-ViaA chaperone complex, which may act on the membrane to optimize the function of some of the respiratory chains. ViaA stimulates the ATPase activity of RavA. This is Regulatory protein ViaA from Salmonella dublin (strain CT_02021853).